The primary structure comprises 564 residues: Rhotekin (564 aa).

Residue arginine 14 is modified to Omega-N-methylarginine. In terms of domain architecture, REM-1 spans 17–98 (ALEMEFKRGR…LQRRKEAQVL (82 aa)). Phosphoserine is present on residues serine 30 and serine 106. An Asymmetric dimethylarginine modification is found at arginine 230. The residue at position 232 (serine 232) is a Phosphoserine. Residues 309–416 (QPTASGALRV…WMEALWQLFF (108 aa)) form the PH domain. The interval 518-564 (TFSLDAAPADHSLGPSRSVAPLPPQRSPKSRGFYSKSQLGPWLQSPV) is disordered. 3 positions are modified to phosphoserine: serine 520, serine 529, and serine 544.

Interacts via its C-terminal region with the TAX1BP3 PDZ domain. This interaction facilitates Rho-mediated activation of the c-Fos serum response element (SRE). Interacts with SEPT9. Specifically binds to GTP-bound RHOA, RHOB and RHOC and inhibits their GTPase activity. As to expression, abundantly expressed in brain and kidney. Weakly expressed in lung, testis, skeletal muscle, heart and thymus.

In terms of biological role, mediates Rho signaling to activate NF-kappa-B and may confer increased resistance to apoptosis to cells in gastric tumorigenesis. May play a novel role in the organization of septin structures. In Mus musculus (Mouse), this protein is Rhotekin.